The chain runs to 1637 residues: Glutamate rich 3 (1637 aa).

6 disordered regions span residues P145–L192, P408–C453, E478–G814, V1111–E1194, I1238–R1445, and K1457–A1637. Polar residues predominate over residues L169–S185. 3 stretches are compositionally biased toward basic and acidic residues: residues E416–P426, K443–S452, and E478–V487. A compositionally biased stretch (acidic residues) spans Y500–D523. Over residues T534–S557 the composition is skewed to basic and acidic residues. Residues E558–R572 are compositionally biased toward acidic residues. Low complexity-rich tracts occupy residues S579–S590 and E608–S617. Composition is skewed to basic and acidic residues over residues D619–E638, E677–A693, Q769–M802, E1115–G1130, L1264–E1307, K1319–A1329, S1342–E1357, and R1402–D1412. Over residues V1476–M1487 the composition is skewed to polar residues. Composition is skewed to basic and acidic residues over residues A1550–V1568, A1589–A1599, and G1614–A1637.

It is found in the cell projection. It localises to the cilium. The protein localises to the cytoplasm. Component of the primary cilium that controls cilium formation and length. May function within retrograde intraflagellar transport (IFT)-associated pathways to remove signaling proteins from primary cilia. Also involved in neuronal vesicle biogenesis and neurotransmitter vesicular function. The sequence is that of Glutamate rich 3 from Mus musculus (Mouse).